The chain runs to 200 residues: Casparian strip membrane protein 1 (200 aa).

The Cytoplasmic segment spans residues 1-38; sequence MSTTIEIPAESSAVAKGKAPLIGASSSSYEKKGGYKKG. Residues 39 to 59 form a helical membrane-spanning segment; that stretch reads IAIFDFILRLGAVISALSAAA. Topologically, residues 60–88 are extracellular; sequence TMGTSDETLPFFTQFFQFEAGYDDFPTFQ. A helical membrane pass occupies residues 89–109; that stretch reads FFVIAMGFVGGYLVLSLPFSV. At 110–121 the chain is on the cytoplasmic side; sequence VAIIRPHAVGIR. Residues 122–142 form a helical membrane-spanning segment; the sequence is LLLLILDTVALTLNTAAAAAA. Residues 143–175 are Extracellular-facing; that stretch reads AAIVYLAHNGNQSANWLAVCQQFGDFCQKVSGG. A glycan (N-linked (GlcNAc...) asparagine) is linked at Asn153. Residues 176–196 traverse the membrane as a helical segment; the sequence is VVASFVSVLVFLLLVVMSAVA. The Cytoplasmic segment spans residues 197–200; it reads LRKH.

The protein belongs to the Casparian strip membrane proteins (CASP) family. Homodimer and heterodimers.

Its subcellular location is the cell membrane. In terms of biological role, regulates membrane-cell wall junctions and localized cell wall deposition. Required for establishment of the Casparian strip membrane domain (CSD) and the subsequent formation of Casparian strips, a cell wall modification of the root endodermis that determines an apoplastic barrier between the intraorganismal apoplasm and the extraorganismal apoplasm and prevents lateral diffusion. The sequence is that of Casparian strip membrane protein 1 from Ricinus communis (Castor bean).